The chain runs to 171 residues: MTTRQSSFNYEEILSCGRGELFGPGNAQLPLPPMLMVHRITDISETGGAFDKGYIRAEYDVRPDDWYFPCHFAGNPIMPGCLGLDGMWQLTGFFLGWLGEPGRGMALSTGEVKFKGMVRPDTKLLEYGIDFKRVMRGRLVLGTADGYLKADGEVIYQASDLRVGLSKDKAA.

His71 is a catalytic residue.

Belongs to the thioester dehydratase family. FabA subfamily. Homodimer.

Its subcellular location is the cytoplasm. It catalyses the reaction a (3R)-hydroxyacyl-[ACP] = a (2E)-enoyl-[ACP] + H2O. The catalysed reaction is (3R)-hydroxydecanoyl-[ACP] = (2E)-decenoyl-[ACP] + H2O. It carries out the reaction (2E)-decenoyl-[ACP] = (3Z)-decenoyl-[ACP]. It participates in lipid metabolism; fatty acid biosynthesis. Necessary for the introduction of cis unsaturation into fatty acids. Catalyzes the dehydration of (3R)-3-hydroxydecanoyl-ACP to E-(2)-decenoyl-ACP and then its isomerization to Z-(3)-decenoyl-ACP. Can catalyze the dehydratase reaction for beta-hydroxyacyl-ACPs with saturated chain lengths up to 16:0, being most active on intermediate chain length. The protein is 3-hydroxydecanoyl-[acyl-carrier-protein] dehydratase of Rhizobium rhizogenes (strain K84 / ATCC BAA-868) (Agrobacterium radiobacter).